Reading from the N-terminus, the 380-residue chain is Ubiquitin-like protein 7 (380 aa).

Positions 18-98 (APKSILQLPE…VLRKSWPEPD (81 aa)) constitute a Ubiquitin-like domain. The segment at 200–313 (TPMPGADSSS…SSGVQSGTPI (114 aa)) is disordered. A compositionally biased stretch (low complexity) spans 206 to 221 (DSSSRSMPSSSYRDMP). At Ser-230 the chain carries Phosphoserine. 2 stretches are compositionally biased toward low complexity: residues 239–253 (STRSTPSSSTPSSRP) and 270–293 (SELATALALASTPESSSHTPTPGT). Positions 294–313 (QGHSSGTSPMSSGVQSGTPI) are enriched in polar residues. In terms of domain architecture, UBA spans 333–377 (SLQIQWQPQLQQLRDMGIQDDELSLRALQATGGDIQAALELIFAG).

Binds ubiquitin. Interacts with MAVS; this interaction enhances TRIM21-dependent 'Lys-27'-linked polyubiquitination of MAVS. In terms of processing, deubiquitinated by OTUD4 which stabilizes UBL7 expression.

Its function is as follows. Interferon-stimulated protein that positively regulates RNA virus-triggered innate immune signaling. Mechanistically, promotes 'Lys-27'-linked polyubiquitination of MAVS through TRIM21 leading to enhanced the IFN signaling pathway. This is Ubiquitin-like protein 7 (Ubl7) from Mus musculus (Mouse).